The chain runs to 58 residues: Large ribosomal subunit protein bL32 (58 aa).

Residues 1–20 (MALPKHKKSKSKRDKRRTHQ) show a composition bias toward basic residues. The disordered stretch occupies residues 1–26 (MALPKHKKSKSKRDKRRTHQKLTAPN).

This sequence belongs to the bacterial ribosomal protein bL32 family.

This is Large ribosomal subunit protein bL32 from Desulfatibacillum aliphaticivorans.